The chain runs to 259 residues: Small ribosomal subunit protein eS1 (259 aa).

2 disordered regions span residues 1–23 (MAVG…KTAD) and 235–259 (ESKS…VDSV). Basic residues predominate over residues 8-19 (KVTKGGKKGGKK). The span at 246–259 (SRPDHYEPPKVDSV) shows a compositional bias: basic and acidic residues.

Belongs to the eukaryotic ribosomal protein eS1 family. As to quaternary structure, component of the small ribosomal subunit. Mature ribosomes consist of a small (40S) and a large (60S) subunit. The 40S subunit contains about 33 different proteins and 1 molecule of RNA (18S). The 60S subunit contains about 49 different proteins and 3 molecules of RNA (28S, 5.8S and 5S).

Its subcellular location is the cytoplasm. This chain is Small ribosomal subunit protein eS1, found in Schistosoma japonicum (Blood fluke).